The following is a 120-amino-acid chain: Chaperonin GroEL (120 aa).

23–27 (DGTTT) contributes to the ATP binding site.

It belongs to the chaperonin (HSP60) family. As to quaternary structure, forms a cylinder of 14 subunits composed of two heptameric rings stacked back-to-back. Interacts with the co-chaperonin GroES.

Its subcellular location is the cytoplasm. The catalysed reaction is ATP + H2O + a folded polypeptide = ADP + phosphate + an unfolded polypeptide.. Together with its co-chaperonin GroES, plays an essential role in assisting protein folding. The GroEL-GroES system forms a nano-cage that allows encapsulation of the non-native substrate proteins and provides a physical environment optimized to promote and accelerate protein folding. In Mycolicibacter nonchromogenicus (Mycobacterium nonchromogenicum), this protein is Chaperonin GroEL.